A 231-amino-acid polypeptide reads, in one-letter code: Putative aminodeoxychorismate lyase (231 aa).

The protein belongs to the class-IV pyridoxal-phosphate-dependent aminotransferase family. It depends on pyridoxal 5'-phosphate as a cofactor.

It is found in the cytoplasm. The protein localises to the nucleus. It catalyses the reaction 4-amino-4-deoxychorismate = 4-aminobenzoate + pyruvate + H(+). It functions in the pathway cofactor biosynthesis; tetrahydrofolate biosynthesis; 4-aminobenzoate from chorismate: step 2/2. Converts 4-amino-4-deoxychorismate into 4-aminobenzoate (PABA) and pyruvate. This Schizosaccharomyces pombe (strain 972 / ATCC 24843) (Fission yeast) protein is Putative aminodeoxychorismate lyase.